Here is an 83-residue protein sequence, read N- to C-terminus: U15-theraphotoxin-Cg1a (83 aa).

The first 21 residues, 1-21 (MKAAILLAFAGLALLSVICHA), serve as a signal peptide directing secretion. Positions 22 to 49 (SENVEQDSFEEVFSAIFAMEDDLKPKER) are excised as a propeptide. Intrachain disulfides connect Cys51–Cys66, Cys58–Cys71, and Cys65–Cys77. Ala81 carries the alanine amide modification.

Belongs to the neurotoxin 10 (Hwtx-1) family. 66 (Jztx-24) subfamily. As to expression, expressed by the venom gland.

It is found in the secreted. Functionally, probable ion channel inhibitor. The protein is U15-theraphotoxin-Cg1a of Chilobrachys guangxiensis (Chinese earth tiger tarantula).